We begin with the raw amino-acid sequence, 263 residues long: Leukocyte-associated immunoglobulin-like receptor 1 (263 aa).

The signal sequence occupies residues 1–21; the sequence is MPLHSVIVLVLVLCLGWKSNT. The Ig-like C2-type domain maps to 27 to 112; that stretch reads SDFTICAEPG…VWSQRSNDLQ (86 aa). A disulfide bridge connects residues Cys-49 and Cys-96. Residue Asn-87 is glycosylated (N-linked (GlcNAc...) asparagine). Residues 144-164 traverse the membrane as a helical segment; that stretch reads ILTVVSVIFLLCLSLFLFCFL. 2 short sequence motifs (ITIM motif) span residues 225–230 and 255–260; these read VTYAQL and STYAAI. 2 positions are modified to phosphotyrosine: Tyr-227 and Tyr-257.

As to quaternary structure, interacts with SH2 domains of tyrosine-protein phosphatases PTPN6 and PTPN11. The interaction with PTPN6 is constitutive. Interacts with the SH2 domain of CSK. Binds with high affinity to extracellular matrix collagens, the interaction is functionally important. Phosphorylation at Tyr-227 and Tyr-257 activates it. May be phosphorylated by LCK. In terms of processing, N-glycosylated. Expressed in lymphoid and non-lymphoid organs.

The protein localises to the membrane. Its function is as follows. Functions as an inhibitory receptor that plays a constitutive negative regulatory role on cytolytic function of natural killer (NK) cells, B-cells and T-cells. Activation by Tyr phosphorylation results in recruitment and activation of the phosphatases PTPN6 and PTPN11. It also reduces the increase of intracellular calcium evoked by B-cell receptor ligation. May also play its inhibitory role independently of SH2-containing phosphatases. Modulates cytokine production in CD4+ T-cells, down-regulating IL2 and IFNG production while inducing secretion of transforming growth factor beta. Also down-regulates IgG and IgE production in B-cells as well as IL8, IL10 and TNF secretion. Inhibits proliferation and induces apoptosis in myeloid leukemia cell lines as well as prevents nuclear translocation of NF-kappa-B p65 subunit/RELA and phosphorylation of I-kappa-B alpha/CHUK in these cells. Inhibits the differentiation of peripheral blood precursors towards dendritic cells. The polypeptide is Leukocyte-associated immunoglobulin-like receptor 1 (Lair1) (Rattus norvegicus (Rat)).